The chain runs to 354 residues: Guanine nucleotide-binding protein G(t) subunit alpha-2 (354 aa).

A disordered region spans residues 1–27 (MGSGASAEDKELAKRSKELEKKLQEDA). The N-myristoyl glycine moiety is linked to residue glycine 2. Over residues 7–27 (AEDKELAKRSKELEKKLQEDA) the composition is skewed to basic and acidic residues. The region spanning 32–354 (KTVKLLLLGA…KENLKDCGLF (323 aa)) is the G-alpha domain. A G1 motif region spans residues 35–48 (KLLLLGAGESGKST). GTP contacts are provided by residues 40-47 (GAGESGKS), 175-181 (LRSRVKT), 200-204 (DVGGQ), 269-272 (NKKD), and alanine 326. Residues serine 47 and threonine 181 each coordinate Mg(2+). The interval 173-181 (DVLRSRVKT) is G2 motif. Residues 196–205 (FRMFDVGGQR) are G3 motif. The tract at residues 265–272 (VLFLNKKD) is G4 motif. The interval 324–329 (TCATDT) is G5 motif.

Belongs to the G-alpha family. G(i/o/t/z) subfamily. In terms of assembly, g proteins are composed of 3 units; alpha, beta and gamma. The alpha chain contains the guanine nucleotide binding site. Retinal rod outer segment.

The protein resides in the cell projection. It is found in the cilium. Its subcellular location is the photoreceptor outer segment. It localises to the photoreceptor inner segment. In terms of biological role, guanine nucleotide-binding proteins (G proteins) are involved as modulators or transducers in various transmembrane signaling systems. Transducin is an amplifier and one of the transducers of a visual impulse that performs the coupling between rhodopsin and cGMP-phosphodiesterase. This chain is Guanine nucleotide-binding protein G(t) subunit alpha-2 (GNAT2), found in Bos taurus (Bovine).